Here is a 428-residue protein sequence, read N- to C-terminus: MKQLHLEPIACIDGEINIPGSKSISNRALLLATLAKGTTTLTNLLDSDDIRYMLASLEQLGVQFELSDDKTRCTVQGMGGAVSASTAQTLFLGNAGTAMRPLCAALTLGQGEFTLTGEPRMEERPIGDLVDALRQLGASVTYLKNDGFPPLTINATGLNGGDVDIAGDLSSQFLTALLMVAPLAKGKVNINIKGELVSKPYIDITLALMAQFGVDVQNHDYARFEINPGQQYLSPGKVLVEGDASSASYFLAAGAIAGGSVKVTGVGRLSIQGDVKFADALEKMGADIEWGDDFIIARSAKLSGIDMDMNHIPDAAMTIATAALFAEGETCLRNIYNWRIKETDRLHAMATELRKVGAVVEEGHDFIRITPPVKMNTAAIDTYNDHRMAMCFSLLAFADCGITINDPDCTSKTFPSYFAEFARLTQEA.

Residues Lys-22, Ser-23, and Arg-27 each contribute to the 3-phosphoshikimate site. Position 22 (Lys-22) interacts with phosphoenolpyruvate. Phosphoenolpyruvate contacts are provided by Gly-96 and Arg-124. Residues Ser-170, Ser-171, Gln-172, Ser-198, Asp-314, Asn-337, and Lys-341 each coordinate 3-phosphoshikimate. Gln-172 is a binding site for phosphoenolpyruvate. The active-site Proton acceptor is Asp-314. Arg-345, Arg-387, and Lys-412 together coordinate phosphoenolpyruvate.

It belongs to the EPSP synthase family. In terms of assembly, monomer.

It localises to the cytoplasm. It carries out the reaction 3-phosphoshikimate + phosphoenolpyruvate = 5-O-(1-carboxyvinyl)-3-phosphoshikimate + phosphate. It functions in the pathway metabolic intermediate biosynthesis; chorismate biosynthesis; chorismate from D-erythrose 4-phosphate and phosphoenolpyruvate: step 6/7. Catalyzes the transfer of the enolpyruvyl moiety of phosphoenolpyruvate (PEP) to the 5-hydroxyl of shikimate-3-phosphate (S3P) to produce enolpyruvyl shikimate-3-phosphate and inorganic phosphate. The polypeptide is 3-phosphoshikimate 1-carboxyvinyltransferase (Shewanella denitrificans (strain OS217 / ATCC BAA-1090 / DSM 15013)).